The sequence spans 916 residues: Chitin synthase B (916 aa).

Disordered stretches follow at residues 1–75 (MAYH…GYSL) and 118–141 (ARSE…GGNG). Residues 14-26 (HTYDDGHQLRDLS) show a composition bias toward basic and acidic residues. The segment covering 59–75 (RGLTASPVQRPTSGYSL) has biased composition (polar residues). The next 7 helical transmembrane spans lie at 544 to 561 (RWLN…MHFG), 588 to 608 (FLTW…MDLV), 629 to 649 (IINT…FILA), 664 to 684 (SFVA…YLVV), 716 to 736 (IIII…FMYL), 845 to 865 (LVTL…SEGL), and 884 to 904 (ALLW…TWFL).

The protein belongs to the chitin synthase family. Class III subfamily. In terms of assembly, interacts with kibesin kinA. In terms of processing, activity requires trypsin activation, suggesting a zymogenic nature. Phosphorylated at yet unidentified residues in a N-terminal disordered region-dependent manner.

It is found in the cell membrane. It localises to the cell tip. The protein localises to the cell septum. The catalysed reaction is [(1-&gt;4)-N-acetyl-beta-D-glucosaminyl](n) + UDP-N-acetyl-alpha-D-glucosamine = [(1-&gt;4)-N-acetyl-beta-D-glucosaminyl](n+1) + UDP + H(+). Its activity is regulated as follows. Activity is stimulated by Mg(2+) and is inhibited by polyoxin D. Polymerizes chitin, a structural polymer of the cell wall and septum, by transferring the sugar moiety of UDP-GlcNAc to the non-reducing end of the growing chitin polymer. Does not substantially contribute to the rigidity of the cell wall but is necessary for normal hyphal growth and organization. In addition to its functions in the formation of normal cell walls of hyphae, is also involved in conidiophore and conidia development. This is Chitin synthase B from Emericella nidulans (strain FGSC A4 / ATCC 38163 / CBS 112.46 / NRRL 194 / M139) (Aspergillus nidulans).